A 288-amino-acid polypeptide reads, in one-letter code: Acetyl-coenzyme A carboxylase carboxyl transferase subunit beta (288 aa).

The region spanning 34–288 (LFAKCPACKH…HLVAFHGGGQ (255 aa)) is the CoA carboxyltransferase N-terminal domain. The Zn(2+) site is built by C38, C41, C56, and C59. The C4-type zinc finger occupies 38–59 (CPACKHMIYKKDLGLAKICPTC).

This sequence belongs to the AccD/PCCB family. As to quaternary structure, acetyl-CoA carboxylase is a heterohexamer composed of biotin carboxyl carrier protein (AccB), biotin carboxylase (AccC) and two subunits each of ACCase subunit alpha (AccA) and ACCase subunit beta (AccD). It depends on Zn(2+) as a cofactor.

The protein resides in the cytoplasm. The catalysed reaction is N(6)-carboxybiotinyl-L-lysyl-[protein] + acetyl-CoA = N(6)-biotinyl-L-lysyl-[protein] + malonyl-CoA. The protein operates within lipid metabolism; malonyl-CoA biosynthesis; malonyl-CoA from acetyl-CoA: step 1/1. Functionally, component of the acetyl coenzyme A carboxylase (ACC) complex. Biotin carboxylase (BC) catalyzes the carboxylation of biotin on its carrier protein (BCCP) and then the CO(2) group is transferred by the transcarboxylase to acetyl-CoA to form malonyl-CoA. In Streptococcus dysgalactiae subsp. equisimilis (strain GGS_124), this protein is Acetyl-coenzyme A carboxylase carboxyl transferase subunit beta.